Reading from the N-terminus, the 250-residue chain is HTH-type transcriptional regulator KipR (250 aa).

Positions N5 to L65 constitute an HTH iclR-type domain. Positions L26–S45 form a DNA-binding region, H-T-H motif. The region spanning I80–Y249 is the IclR-ED domain.

Transcriptional repressor of the kip gene-containing operon. The protein is HTH-type transcriptional regulator KipR (kipR) of Bacillus subtilis (strain 168).